The following is an 81-amino-acid chain: Photosystem I iron-sulfur center (81 aa).

2 consecutive 4Fe-4S ferredoxin-type domains span residues 2–31 and 39–68; these read SHSV…MIPW and IAPA…VRVY. Cysteine 11, cysteine 14, cysteine 17, cysteine 21, cysteine 48, cysteine 51, cysteine 54, and cysteine 58 together coordinate [4Fe-4S] cluster.

The eukaryotic PSI reaction center is composed of at least 11 subunits. The cofactor is [4Fe-4S] cluster.

It is found in the plastid. The protein resides in the chloroplast thylakoid membrane. The enzyme catalyses reduced [plastocyanin] + hnu + oxidized [2Fe-2S]-[ferredoxin] = oxidized [plastocyanin] + reduced [2Fe-2S]-[ferredoxin]. Its function is as follows. Apoprotein for the two 4Fe-4S centers FA and FB of photosystem I (PSI); essential for photochemical activity. FB is the terminal electron acceptor of PSI, donating electrons to ferredoxin. The C-terminus interacts with PsaA/B/D and helps assemble the protein into the PSI complex. Required for binding of PsaD and PsaE to PSI. PSI is a plastocyanin-ferredoxin oxidoreductase, converting photonic excitation into a charge separation, which transfers an electron from the donor P700 chlorophyll pair to the spectroscopically characterized acceptors A0, A1, FX, FA and FB in turn. The protein is Photosystem I iron-sulfur center of Chloranthus spicatus (Chulantree).